The chain runs to 99 residues: Malonate decarboxylase acyl carrier protein (99 aa).

Residue Ser25 is modified to O-(phosphoribosyl dephospho-coenzyme A)serine.

It belongs to the MdcC family. Covalently binds the prosthetic group of malonate decarboxylase.

It is found in the cytoplasm. Subunit of malonate decarboxylase, it is an acyl carrier protein to which acetyl and malonyl thioester residues are bound via a 2'-(5''-phosphoribosyl)-3'-dephospho-CoA prosthetic group and turn over during the catalytic mechanism. This chain is Malonate decarboxylase acyl carrier protein, found in Pseudomonas syringae pv. tomato (strain ATCC BAA-871 / DC3000).